A 222-amino-acid polypeptide reads, in one-letter code: Peroxiredoxin (222 aa).

In terms of domain architecture, Thioredoxin spans 7-163 (PRLGEPAPAF…VIRLVDALQT (157 aa)). Cysteine 49 functions as the Cysteine sulfenic acid (-SOH) intermediate in the catalytic mechanism. Arginine 126 contributes to the substrate binding site. A disulfide bridge connects residues cysteine 212 and cysteine 218.

The protein belongs to the peroxiredoxin family. Prx6 subfamily. In terms of assembly, homodecamer. Pentamer of dimers that assemble into a ring structure.

It is found in the cytoplasm. The catalysed reaction is a hydroperoxide + [thioredoxin]-dithiol = an alcohol + [thioredoxin]-disulfide + H2O. Functionally, thiol-specific peroxidase that catalyzes the reduction of hydrogen peroxide and organic hydroperoxides to water and alcohols, respectively. Plays a role in cell protection against oxidative stress by detoxifying peroxides. This Aquifex aeolicus (strain VF5) protein is Peroxiredoxin.